The sequence spans 303 residues: uncharacterized protein (303 aa).

Disordered stretches follow at residues 1–89 and 132–159; these read MTSP…NVRS and SELPDLSGPVQRTVPCKPSPDRGSSTPR. Over residues 61–89 the composition is skewed to polar residues; the sequence is RASQSGYRPSDPLTTTRQSNPAPGANVRS. 2 consecutive transmembrane segments (helical) span residues 205-225 and 264-284; these read LLLSVALFFVWMIAVAFLYLL and VLVGLVNIVLMTTMAAIAAFV.

It to M.tuberculosis Rv0007.

The protein resides in the cell membrane. This is an uncharacterized protein from Mycobacterium leprae (strain TN).